A 192-amino-acid chain; its full sequence is Crossover junction endodeoxyribonuclease RuvC (192 aa).

Residues D20, E80, and D153 contribute to the active site. Residues D20, E80, and D153 each contribute to the Mg(2+) site.

The protein belongs to the RuvC family. In terms of assembly, homodimer which binds Holliday junction (HJ) DNA. The HJ becomes 2-fold symmetrical on binding to RuvC with unstacked arms; it has a different conformation from HJ DNA in complex with RuvA. In the full resolvosome a probable DNA-RuvA(4)-RuvB(12)-RuvC(2) complex forms which resolves the HJ. Mg(2+) serves as cofactor.

It is found in the cytoplasm. It carries out the reaction Endonucleolytic cleavage at a junction such as a reciprocal single-stranded crossover between two homologous DNA duplexes (Holliday junction).. Functionally, the RuvA-RuvB-RuvC complex processes Holliday junction (HJ) DNA during genetic recombination and DNA repair. Endonuclease that resolves HJ intermediates. Cleaves cruciform DNA by making single-stranded nicks across the HJ at symmetrical positions within the homologous arms, yielding a 5'-phosphate and a 3'-hydroxyl group; requires a central core of homology in the junction. The consensus cleavage sequence is 5'-(A/T)TT(C/G)-3'. Cleavage occurs on the 3'-side of the TT dinucleotide at the point of strand exchange. HJ branch migration catalyzed by RuvA-RuvB allows RuvC to scan DNA until it finds its consensus sequence, where it cleaves and resolves the cruciform DNA. The polypeptide is Crossover junction endodeoxyribonuclease RuvC (Christiangramia forsetii (strain DSM 17595 / CGMCC 1.15422 / KT0803) (Gramella forsetii)).